The following is a 556-amino-acid chain: Glutamine--tRNA ligase (556 aa).

A 'HIGH' region motif is present at residues 35 to 45 (PEPNGYLHIGH). ATP contacts are provided by residues 36-38 (EPN) and 42-48 (HIGHAKS). Residues Asp-68 and Tyr-213 each contribute to the L-glutamine site. Residues Thr-232 and 262 to 263 (RL) each bind ATP. The short motif at 269 to 273 (VTSKR) is the 'KMSKS' region element.

This sequence belongs to the class-I aminoacyl-tRNA synthetase family. In terms of assembly, monomer.

The protein localises to the cytoplasm. The enzyme catalyses tRNA(Gln) + L-glutamine + ATP = L-glutaminyl-tRNA(Gln) + AMP + diphosphate. The protein is Glutamine--tRNA ligase of Pseudomonas aeruginosa (strain ATCC 15692 / DSM 22644 / CIP 104116 / JCM 14847 / LMG 12228 / 1C / PRS 101 / PAO1).